Here is a 73-residue protein sequence, read N- to C-terminus: MIVKVKVKPNAKKEEIREIQKDYFEIRVTVPPEKGKANSRVIELLSKHLKIPKSRIKLKKGEKSREKIFEIID.

The protein belongs to the UPF0235 family.

In Persephonella marina (strain DSM 14350 / EX-H1), this protein is UPF0235 protein PERMA_1406.